A 121-amino-acid polypeptide reads, in one-letter code: Kunitz-type serine protease inhibitor A (121 aa).

BPTI/Kunitz inhibitor domains follow at residues 10–59 (CYVA…KASC) and 61–111 (PETE…NKYT). Cystine bridges form between cysteine 10/cysteine 59, cysteine 19/cysteine 42, cysteine 34/cysteine 55, cysteine 70/cysteine 120, cysteine 79/cysteine 103, and cysteine 95/cysteine 116.

In terms of processing, N-glycosylated. In terms of tissue distribution, highly expressed in gut. Low-level expression in salivary gland and ovary. Not detected in fat body and hemocytes.

It is found in the secreted. Functionally, serine protease inhibitor. Inhibits bovine trypsin, bovine chymotrypsin, human plasmin, human plasma kallikrein and human neutrophil elastase, but not bovine thrombin, human factor Xa or porcine pancreatic kallikrein. Reduces cell viability and inhibits capillary tube formation in vitro probably by reducing bradykinin release. May play a role in blocking blood coagulation during the larvae fixation on cattle. The protein is Kunitz-type serine protease inhibitor A of Rhipicephalus microplus (Cattle tick).